A 239-amino-acid chain; its full sequence is Adapter protein MecA (239 aa).

Positions 118 to 128 (EQRTKEKEAQG) are enriched in basic and acidic residues. A disordered region spans residues 118–137 (EQRTKEKEAQGSKRQKSSAR).

It belongs to the MecA family. As to quaternary structure, homodimer.

Enables the recognition and targeting of unfolded and aggregated proteins to the ClpC protease or to other proteins involved in proteolysis. In Staphylococcus aureus (strain bovine RF122 / ET3-1), this protein is Adapter protein MecA.